The following is a 489-amino-acid chain: Glucose-6-phosphate isomerase (489 aa).

Glu309 serves as the catalytic Proton donor. Residues His340 and Lys459 contribute to the active site.

This sequence belongs to the GPI family.

It localises to the cytoplasm. The enzyme catalyses alpha-D-glucose 6-phosphate = beta-D-fructose 6-phosphate. The protein operates within carbohydrate biosynthesis; gluconeogenesis. Its pathway is carbohydrate degradation; glycolysis; D-glyceraldehyde 3-phosphate and glycerone phosphate from D-glucose: step 2/4. Functionally, catalyzes the reversible isomerization of glucose-6-phosphate to fructose-6-phosphate. This chain is Glucose-6-phosphate isomerase, found in Idiomarina loihiensis (strain ATCC BAA-735 / DSM 15497 / L2-TR).